Consider the following 533-residue polypeptide: uncharacterized protein (533 aa).

Composition is skewed to polar residues over residues 30–43 (SQQG…VKNH), 79–91 (NAGT…THLS), 231–247 (NVKS…SSSA), and 254–263 (GRQSNSPNSN). 2 disordered regions span residues 30-92 (SQQG…HLSA) and 221-274 (SLSP…PGAS). A Phosphoserine modification is found at S336. Residues 475-510 (HPSLSNSAASPPVSSPGLRRSHIPVHEGLKHTRDGV) are disordered. Over residues 476-490 (PSLSNSAASPPVSSP) the composition is skewed to low complexity. The span at 498-510 (PVHEGLKHTRDGV) shows a compositional bias: basic and acidic residues.

It localises to the nucleus. This is an uncharacterized protein from Schizosaccharomyces pombe (strain 972 / ATCC 24843) (Fission yeast).